The following is a 333-amino-acid chain: Ephrin-B2 (333 aa).

The signal sequence occupies residues 1–27; sequence MAVRRDSVWKYCWGVLMVLCRTAISKS. Residues 28–164 enclose the Ephrin RBD domain; it reads IVLEPIYWNS…TRAMKILMKV (137 aa). Over 28–229 the chain is Extracellular; it reads IVLEPIYWNS…ILGSEVALFA (202 aa). N-linked (GlcNAc...) asparagine glycosylation is present at asparagine 36. Disulfide bonds link cysteine 62–cysteine 101 and cysteine 89–cysteine 153. Asparagine 139 is a glycosylation site (N-linked (GlcNAc...) asparagine). The disordered stretch occupies residues 165 to 213; that stretch reads GQDASSAGSTRNKDPTRRPELEAGTNGRSSTTSPFVKPNPGSSTDGNSA. Over residues 175 to 185 the composition is skewed to basic and acidic residues; that stretch reads RNKDPTRRPEL. The span at 190–213 shows a compositional bias: polar residues; that stretch reads NGRSSTTSPFVKPNPGSSTDGNSA. The chain crosses the membrane as a helical span at residues 230 to 250; sequence GIASGCIIFIVIIITLVVLLL. At 251-333 the chain is on the cytoplasmic side; it reads KYRRRHRKHS…QSPANIYYKV (83 aa). Serine 260 is modified (phosphoserine). Phosphothreonine is present on threonine 274. Omega-N-methylarginine is present on arginine 277. The short motif at 331–333 is the PDZ-binding element; that stretch reads YKV.

The protein belongs to the ephrin family. As to quaternary structure, interacts with PDZRN3. Binds to the receptor tyrosine kinases EPHA4, EPHB4 and EPHA3. (Microbial infection) Interacts with Hendra virus and Nipah virus G protein. Post-translationally, inducible phosphorylation of tyrosine residues in the cytoplasmic domain. In terms of tissue distribution, lung and kidney.

The protein resides in the cell membrane. Its subcellular location is the cell junction. The protein localises to the adherens junction. In terms of biological role, cell surface transmembrane ligand for Eph receptors, a family of receptor tyrosine kinases which are crucial for migration, repulsion and adhesion during neuronal, vascular and epithelial development. Binds promiscuously Eph receptors residing on adjacent cells, leading to contact-dependent bidirectional signaling into neighboring cells. The signaling pathway downstream of the receptor is referred to as forward signaling while the signaling pathway downstream of the ephrin ligand is referred to as reverse signaling. Binds to receptor tyrosine kinase including EPHA4, EPHA3 and EPHB4. Together with EPHB4 plays a central role in heart morphogenesis and angiogenesis through regulation of cell adhesion and cell migration. EPHB4-mediated forward signaling controls cellular repulsion and segregation from EFNB2-expressing cells. May play a role in constraining the orientation of longitudinally projecting axons. Its function is as follows. (Microbial infection) Acts as a receptor for Hendra virus and Nipah virus. In Homo sapiens (Human), this protein is Ephrin-B2 (EFNB2).